The following is a 901-amino-acid chain: HTH-type transcriptional regulator MalT (901 aa).

ATP is bound at residue 39–46; that stretch reads SPAGYGKT. The 66-residue stretch at 829–894 folds into the HTH luxR-type domain; that stretch reads ELIRTSPLTQ…AAVQHAQKLL (66 aa). Positions 853-872 form a DNA-binding region, H-T-H motif; sequence NEQIAGELEVAATTIKTHIR.

Belongs to the MalT family. As to quaternary structure, monomer in solution. Oligomerizes to an active state in the presence of the positive effectors ATP and maltotriose.

Activated by ATP and maltotriose, which are both required for DNA binding. Its function is as follows. Positively regulates the transcription of the maltose regulon whose gene products are responsible for uptake and catabolism of malto-oligosaccharides. Specifically binds to the promoter region of its target genes, recognizing a short DNA motif called the MalT box. In Shigella boydii serotype 4 (strain Sb227), this protein is HTH-type transcriptional regulator MalT.